An 849-amino-acid polypeptide reads, in one-letter code: MKGVDDAFLGVGDKPGLDIWCIMGSNLIAIEKSLHGKFYTGNTYIILSTVELKSGVRQHNVHYWVGEEAKEEDCLTASDKAIELDVALGSNTVQYRETQGEESDKFLSYFKPCIIPIQGSLSSHMRIYGDKSKDTTMFRCEGEHVARVTEVPFSRSSLDHKAVFVVDTESKIFLFSGCNSSMQTRAKALDVVKHLKENRHCGRCEIATIEDGKLVGDSDAGDFWNLFGGYAPIPRDVQDTVMTELMTTSSKKLFWINKRNLVPVETNLLEREMLNSDRNYILDCGTEVFLWMGMTTLVSERRTSVTALEDYVRCEGRQSNARSVILTEGHETVEFKMHFQHWPKNAVPKLYEAGREKVAAIFKHQGYDVTEIPEDKPRHFISCNGSLKVWLVDNGSVTLLCTEEQEQLYNGDCYIIRYSYIEDGKDYHLFFAWSGLNSINEDRVAAASLMSGMIDSVKGHAVVAQVFEGREPEMFFLVFKSLIIFKGGRSMAYKNFVSQRSDANGWYQKNGVALFRVQGLKHDCIRAIQVDLAASSLNSSHCYILQAGGSFFTWLGSLSSPSDHNLLDRMMDKLCPLKQSLLVREGSEPDRFWEALGGRSEYLREKQVKDWPADPHLYTCHFEQGLFKAKEVFSFSQDDLVTEEILILDCVEELHIWVGHQSGVLSKEQALDIGKMFLQAGIHQDGRRPIDTTMYIVTEGDEPRFFTSFFNWDYSKQTMLGNSFERKLAILKGISQKLETPERSLRKSSSSSLPRRSPGTSSSEPTTPEQRAAARTFASASTGKLLRERSPAALSPSLSTPSPSPRSRSSASSSPASWNSTPSTVARRLFPPSLHASAEAVATGTPRRR.

Gelsolin-like repeat units lie at residues 30-107 (IEKS…DKFL), 147-213 (RVTE…EDGK), 262-335 (VPVE…TVEF), 405-475 (QEQL…PEMF), and 527-566 (AIQVDLAASSLNSSHCYILQAGGSFFTWLGSLSSPSDHNL). The tract at residues 739-849 (ETPERSLRKS…AVATGTPRRR (111 aa)) is disordered. Low complexity-rich tracts occupy residues 747 to 782 (KSSSSSLPRRSPGTSSSEPTTPEQRAAARTFASAST) and 791 to 823 (PAALSPSLSTPSPSPRSRSSASSSPASWNSTPS).

It belongs to the villin/gelsolin family. Expressed in roots, young leaves, and inflorescences, mostly in the vasculature of roots, leaves, and filaments of the anthers. Also detected in guard cells.

The protein resides in the cytoplasm. It is found in the cytoskeleton. Functionally, ca(2+)-independent actin-binding protein. Binds actin microfilaments (MFs). Involved in actin filament bundling, severing and capping. Caps the barbed end of actin filaments and protects them from disassembly. Promotes VLN3-mediated MF severing. The chain is Villin-1 from Oryza sativa subsp. japonica (Rice).